A 445-amino-acid polypeptide reads, in one-letter code: Phosphoglucosamine mutase (445 aa).

The active-site Phosphoserine intermediate is serine 104. Serine 104, aspartate 243, aspartate 245, and aspartate 247 together coordinate Mg(2+). The residue at position 104 (serine 104) is a Phosphoserine.

This sequence belongs to the phosphohexose mutase family. Mg(2+) serves as cofactor. In terms of processing, activated by phosphorylation.

It catalyses the reaction alpha-D-glucosamine 1-phosphate = D-glucosamine 6-phosphate. Functionally, catalyzes the conversion of glucosamine-6-phosphate to glucosamine-1-phosphate. The polypeptide is Phosphoglucosamine mutase (Neisseria subflava).